The following is a 501-amino-acid chain: Dipeptide and tripeptide permease B (501 aa).

The Cytoplasmic portion of the chain corresponds to 1-27 (MRPSAPTGLLQQPKPFFMIFFVELWER). Residues 28–48 (FGYYGVQGILAVFFVQQLGFS) traverse the membrane as a helical segment. Topologically, residues 49-52 (QEQS) are periplasmic. The helical transmembrane segment at 53–73 (FITFGAFSALVYGLISVGGYV) threads the bilayer. Over 74-82 (GDHVLGTKR) the chain is Cytoplasmic. Residues 83–103 (TMVLGAIVLVIGYFMTGMSIY) form a helical membrane-spanning segment. Residues 104–106 (NPD) are Periplasmic-facing. The helical transmembrane segment at 107-127 (LIFYALGTIAVGNCLFKANPA) threads the bilayer. Over 128–146 (SLLAKCYERGDPRLDGAFT) the chain is Cytoplasmic. The helical transmembrane segment at 147–167 (LFYMSINIGSLISLSLAPVIA) threads the bilayer. Over 168-172 (DHYGY) the chain is Periplasmic. The chain crosses the membrane as a helical span at residues 173 to 193 (TVTYNLCGVGLVIALLTFFAC). Topologically, residues 194-211 (RHMVRDIGSEPDHLPLDY) are cytoplasmic. The chain crosses the membrane as a helical span at residues 212–232 (GKLLLVLLGSVALVFFCAWLM). Position 233 (H233) is a topological domain, periplasmic. A helical transmembrane segment spans residues 234-254 (HVVIANMVLMTVTLAVVIFFF). Topologically, residues 255–267 (REAFKLDAVARNK) are cytoplasmic. Residues 268–288 (MYVAFVLMLEAVVFYVLYAQM) traverse the membrane as a helical segment. Topologically, residues 289–311 (PTSLNFFAINNMHHEMLGMSVNP) are periplasmic. A helical transmembrane segment spans residues 312 to 332 (ISFQALNPFWVVVGSPVLAMI). The Cytoplasmic segment spans residues 333 to 350 (YTRLGSKGRDLTMPLKFT). Residues 351–371 (LGMLFCSLGFLTAAASGIWFA) form a helical membrane-spanning segment. At 372–380 (DAQGLTSPW) the chain is on the periplasmic side. Residues 381-401 (FMVLIYLFQSLGELMISALGL) form a helical membrane-spanning segment. Residues 402 to 411 (AMVAALVPQR) lie on the Cytoplasmic side of the membrane. A helical membrane pass occupies residues 412-432 (LMGFILGMWFLTQAMASLLGG). At 433–456 (YVATFTAVPQGVTDPLQTLPIYTD) the chain is on the periplasmic side. The chain crosses the membrane as a helical span at residues 457 to 477 (VFGKIGLVTLLVAVVMALMVP). The Cytoplasmic segment spans residues 478-501 (WLNRMMHAGQGEEGEDLLSQQAKA).

Belongs to the major facilitator superfamily. Proton-dependent oligopeptide transporter (POT/PTR) (TC 2.A.17) family. DtpB subfamily.

It is found in the cell inner membrane. Proton-dependent permease that transports di- and tripeptides. In Aeromonas hydrophila subsp. hydrophila (strain ATCC 7966 / DSM 30187 / BCRC 13018 / CCUG 14551 / JCM 1027 / KCTC 2358 / NCIMB 9240 / NCTC 8049), this protein is Dipeptide and tripeptide permease B.